Here is a 426-residue protein sequence, read N- to C-terminus: Serine--tRNA ligase (426 aa).

Position 230–232 (230–232) interacts with L-serine; sequence TAE. 261 to 263 contacts ATP; it reads RSE. L-serine is bound at residue Glu284. An ATP-binding site is contributed by 348–351; sequence EISS. Ser384 provides a ligand contact to L-serine.

Belongs to the class-II aminoacyl-tRNA synthetase family. Type-1 seryl-tRNA synthetase subfamily. Homodimer. The tRNA molecule binds across the dimer.

It localises to the cytoplasm. The enzyme catalyses tRNA(Ser) + L-serine + ATP = L-seryl-tRNA(Ser) + AMP + diphosphate + H(+). It catalyses the reaction tRNA(Sec) + L-serine + ATP = L-seryl-tRNA(Sec) + AMP + diphosphate + H(+). It participates in aminoacyl-tRNA biosynthesis; selenocysteinyl-tRNA(Sec) biosynthesis; L-seryl-tRNA(Sec) from L-serine and tRNA(Sec): step 1/1. Catalyzes the attachment of serine to tRNA(Ser). Is also able to aminoacylate tRNA(Sec) with serine, to form the misacylated tRNA L-seryl-tRNA(Sec), which will be further converted into selenocysteinyl-tRNA(Sec). This Novosphingobium aromaticivorans (strain ATCC 700278 / DSM 12444 / CCUG 56034 / CIP 105152 / NBRC 16084 / F199) protein is Serine--tRNA ligase.